The primary structure comprises 115 residues: NADH-ubiquinone oxidoreductase chain 3 (115 aa).

The next 3 helical transmembrane spans lie at 3–23, 55–75, and 84–104; these read LMLT…IAFW, FFLV…LLPL, and LNTM…SLAY.

Belongs to the complex I subunit 3 family. As to quaternary structure, core subunit of respiratory chain NADH dehydrogenase (Complex I) which is composed of 45 different subunits. Interacts with TMEM186. Interacts with TMEM242.

The protein localises to the mitochondrion inner membrane. It carries out the reaction a ubiquinone + NADH + 5 H(+)(in) = a ubiquinol + NAD(+) + 4 H(+)(out). In terms of biological role, core subunit of the mitochondrial membrane respiratory chain NADH dehydrogenase (Complex I) which catalyzes electron transfer from NADH through the respiratory chain, using ubiquinone as an electron acceptor. Essential for the catalytic activity of complex I. This Equus asinus (Donkey) protein is NADH-ubiquinone oxidoreductase chain 3.